A 240-amino-acid polypeptide reads, in one-letter code: DNA repair protein RecO (240 aa).

This sequence belongs to the RecO family.

Involved in DNA repair and RecF pathway recombination. This is DNA repair protein RecO from Wolbachia pipientis wMel.